Reading from the N-terminus, the 803-residue chain is Phenylalanine--tRNA ligase beta subunit (803 aa).

A tRNA-binding domain is found at 40-150 (SNKFYGIVIA…IDAPIGCNFY (111 aa)). The B5 domain maps to 405 to 480 (PKIKIIKLHR…RIYGYNHIPK (76 aa)). 2 residues coordinate Mg(2+): aspartate 458 and glutamate 468. One can recognise an FDX-ACB domain in the interval 710–803 (SKFPKNYRDI…LKKHFNAIFR (94 aa)).

This sequence belongs to the phenylalanyl-tRNA synthetase beta subunit family. Type 1 subfamily. As to quaternary structure, tetramer of two alpha and two beta subunits. Requires Mg(2+) as cofactor.

It is found in the cytoplasm. The enzyme catalyses tRNA(Phe) + L-phenylalanine + ATP = L-phenylalanyl-tRNA(Phe) + AMP + diphosphate + H(+). The sequence is that of Phenylalanine--tRNA ligase beta subunit from Blochmanniella floridana.